The chain runs to 456 residues: Bifunctional protein GlmU (456 aa).

Residues 1 to 229 form a pyrophosphorylase region; it reads MTKKALSAVI…VMEVEGANNR (229 aa). UDP-N-acetyl-alpha-D-glucosamine is bound by residues 11 to 14, Lys25, Gln76, 81 to 82, 103 to 105, Gly140, Glu154, Asn169, and Asn227; these read LAAG, GT, and YGD. A Mg(2+)-binding site is contributed by Asp105. Asn227 contacts Mg(2+). The linker stretch occupies residues 230 to 250; sequence LQLAALERYLQNKQASKLLLE. Residues 251–456 form an N-acetyltransferase region; that stretch reads GVMIYDPARF…QGWQRPIKKK (206 aa). UDP-N-acetyl-alpha-D-glucosamine-binding residues include Arg333 and Lys351. The active-site Proton acceptor is the His363. Residues Tyr366 and Asn377 each coordinate UDP-N-acetyl-alpha-D-glucosamine. Acetyl-CoA-binding positions include Ala380, 386–387, Ser405, Ala423, and Arg440; that span reads NY.

This sequence in the N-terminal section; belongs to the N-acetylglucosamine-1-phosphate uridyltransferase family. It in the C-terminal section; belongs to the transferase hexapeptide repeat family. Homotrimer. Requires Mg(2+) as cofactor.

It is found in the cytoplasm. It carries out the reaction alpha-D-glucosamine 1-phosphate + acetyl-CoA = N-acetyl-alpha-D-glucosamine 1-phosphate + CoA + H(+). The enzyme catalyses N-acetyl-alpha-D-glucosamine 1-phosphate + UTP + H(+) = UDP-N-acetyl-alpha-D-glucosamine + diphosphate. It participates in nucleotide-sugar biosynthesis; UDP-N-acetyl-alpha-D-glucosamine biosynthesis; N-acetyl-alpha-D-glucosamine 1-phosphate from alpha-D-glucosamine 6-phosphate (route II): step 2/2. The protein operates within nucleotide-sugar biosynthesis; UDP-N-acetyl-alpha-D-glucosamine biosynthesis; UDP-N-acetyl-alpha-D-glucosamine from N-acetyl-alpha-D-glucosamine 1-phosphate: step 1/1. It functions in the pathway bacterial outer membrane biogenesis; LPS lipid A biosynthesis. Its function is as follows. Catalyzes the last two sequential reactions in the de novo biosynthetic pathway for UDP-N-acetylglucosamine (UDP-GlcNAc). The C-terminal domain catalyzes the transfer of acetyl group from acetyl coenzyme A to glucosamine-1-phosphate (GlcN-1-P) to produce N-acetylglucosamine-1-phosphate (GlcNAc-1-P), which is converted into UDP-GlcNAc by the transfer of uridine 5-monophosphate (from uridine 5-triphosphate), a reaction catalyzed by the N-terminal domain. The protein is Bifunctional protein GlmU of Haemophilus influenzae (strain PittGG).